Here is a 473-residue protein sequence, read N- to C-terminus: Ribulose bisphosphate carboxylase large chain (473 aa).

Substrate-binding residues include Asn116 and Thr166. The active-site Proton acceptor is the Lys168. Lys170 contacts substrate. Positions 194, 196, and 197 each coordinate Mg(2+). Lys194 carries the N6-carboxylysine modification. His287 serves as the catalytic Proton acceptor. Arg288, His320, and Ser372 together coordinate substrate.

It belongs to the RuBisCO large chain family. Type I subfamily. Heterohexadecamer of 8 large chains and 8 small chains. Mg(2+) is required as a cofactor.

It catalyses the reaction 2 (2R)-3-phosphoglycerate + 2 H(+) = D-ribulose 1,5-bisphosphate + CO2 + H2O. The enzyme catalyses D-ribulose 1,5-bisphosphate + O2 = 2-phosphoglycolate + (2R)-3-phosphoglycerate + 2 H(+). In terms of biological role, ruBisCO catalyzes two reactions: the carboxylation of D-ribulose 1,5-bisphosphate, the primary event in carbon dioxide fixation, as well as the oxidative fragmentation of the pentose substrate. Both reactions occur simultaneously and in competition at the same active site. The chain is Ribulose bisphosphate carboxylase large chain from Nitrosospira sp. (strain TCH716).